The chain runs to 346 residues: tRNA N6-adenosine threonylcarbamoyltransferase (346 aa).

Fe cation is bound by residues His111 and His115. Substrate contacts are provided by residues 134 to 138 (LVSGG), Asp167, Gly180, and Asn277. Asp305 provides a ligand contact to Fe cation.

The protein belongs to the KAE1 / TsaD family. Requires Fe(2+) as cofactor.

The protein localises to the cytoplasm. The enzyme catalyses L-threonylcarbamoyladenylate + adenosine(37) in tRNA = N(6)-L-threonylcarbamoyladenosine(37) in tRNA + AMP + H(+). Its function is as follows. Required for the formation of a threonylcarbamoyl group on adenosine at position 37 (t(6)A37) in tRNAs that read codons beginning with adenine. Is involved in the transfer of the threonylcarbamoyl moiety of threonylcarbamoyl-AMP (TC-AMP) to the N6 group of A37, together with TsaE and TsaB. TsaD likely plays a direct catalytic role in this reaction. This is tRNA N6-adenosine threonylcarbamoyltransferase from Bordetella bronchiseptica (strain ATCC BAA-588 / NCTC 13252 / RB50) (Alcaligenes bronchisepticus).